Reading from the N-terminus, the 371-residue chain is Ferrochelatase (371 aa).

Fe cation contacts are provided by His218 and Glu299.

Belongs to the ferrochelatase family.

It is found in the cytoplasm. The enzyme catalyses heme b + 2 H(+) = protoporphyrin IX + Fe(2+). Its pathway is porphyrin-containing compound metabolism; protoheme biosynthesis; protoheme from protoporphyrin-IX: step 1/1. In terms of biological role, catalyzes the ferrous insertion into protoporphyrin IX. In Cupriavidus taiwanensis (strain DSM 17343 / BCRC 17206 / CCUG 44338 / CIP 107171 / LMG 19424 / R1) (Ralstonia taiwanensis (strain LMG 19424)), this protein is Ferrochelatase.